The primary structure comprises 392 residues: Ceramide synthase 5 (392 aa).

The Lumenal portion of the chain corresponds to 1-46 (MATAAQGPLSLLWGWLWSERFWLPENVSWADLEGPADGYGYPRGRH). Residue Asn-26 is glycosylated (N-linked (GlcNAc...) asparagine). Residues 47–67 (ILSVFPLAAGIFFVRLLFERF) traverse the membrane as a helical segment. The tract at residues 75-136 (CIGIEDSGPY…RHRRNQDKPP (62 aa)) is homeobox-like. Residues 139-340 (TKFCESMWRF…IARIALKALI (202 aa)) enclose the TLC domain. A run of 4 helical transmembrane segments spans residues 148-168 (FTFY…SPWF), 183-203 (LSSG…SLMF), 214-234 (FLIM…SYIN), and 272-292 (LFVI…PFWI). The short motif at 299 to 309 (ESWEIIGPYAS) is the Last loop motif element. The helical transmembrane segment at 311–331 (WLLNGLLLTLQLLHVIWSYLI) threads the bilayer. Topologically, residues 332 to 392 (ARIALKALIR…HMGGSYWAEE (61 aa)) are cytoplasmic. Residues 349-392 (RSDVESSSEEEDVTTCTKSPCDSSSSNGANRVNGHMGGSYWAEE) are disordered. Positions 362–378 (TTCTKSPCDSSSSNGAN) are enriched in polar residues.

Interacts with PAQR4; the interaction regulates the stability and activity of CERS5 and is inhibited in presence of ceramides. Phosphorylated at the C-terminus by CK2.

It localises to the endoplasmic reticulum membrane. It carries out the reaction a sphingoid base + hexadecanoyl-CoA = an N-hexadecanoyl-sphingoid base + CoA + H(+). The catalysed reaction is sphinganine + hexadecanoyl-CoA = N-hexadecanoylsphinganine + CoA + H(+). The enzyme catalyses hexadecasphinganine + hexadecanoyl-CoA = N-hexadecanoylhexadecasphinganine + CoA + H(+). It catalyses the reaction sphing-4-enine + hexadecanoyl-CoA = N-hexadecanoylsphing-4-enine + CoA + H(+). It carries out the reaction 2-hydroxyhexadecanoyl-CoA + sphinganine = N-(2-hydroxyhexadecanoyl)-sphinganine + CoA + H(+). The catalysed reaction is sphinganine + tetradecanoyl-CoA = N-(tetradecanoyl)-sphinganine + CoA + H(+). The enzyme catalyses sphinganine + octadecanoyl-CoA = N-(octadecanoyl)-sphinganine + CoA + H(+). It catalyses the reaction sphinganine + (9Z)-octadecenoyl-CoA = N-(9Z-octadecenoyl)-sphinganine + CoA + H(+). It carries out the reaction a fatty acyl-CoA + sphing-4-enine = an N-acylsphing-4-enine + CoA + H(+). It participates in lipid metabolism; sphingolipid metabolism. With respect to regulation, inhibited by fumonisin B1. In terms of biological role, ceramide synthase that catalyzes the transfer of the acyl chain from acyl-CoA to a sphingoid base, with high selectivity toward palmitoyl-CoA (hexadecanoyl-CoA; C16:0-CoA). Can use other acyl donors, but with less efficiency. N-acylates sphinganine and sphingosine bases to form dihydroceramides and ceramides in de novo synthesis and salvage pathways, respectively. Plays a role in de novo ceramide synthesis and surfactant homeostasis in pulmonary epithelia. This chain is Ceramide synthase 5, found in Homo sapiens (Human).